A 1155-amino-acid polypeptide reads, in one-letter code: ATP-dependent helicase/deoxyribonuclease subunit B (1155 aa).

A UvrD-like helicase ATP-binding domain is found at Met1–His300. Gly8 to Ser15 provides a ligand contact to ATP. The region spanning Thr280–Asn590 is the UvrD-like helicase C-terminal domain. Residues Cys792, Cys1111, Cys1114, and Cys1120 each coordinate [4Fe-4S] cluster.

This sequence belongs to the helicase family. AddB/RexB type 1 subfamily. As to quaternary structure, heterodimer of AddA and AddB. It depends on Mg(2+) as a cofactor. Requires [4Fe-4S] cluster as cofactor.

In terms of biological role, the heterodimer acts as both an ATP-dependent DNA helicase and an ATP-dependent, dual-direction single-stranded exonuclease. Recognizes the chi site generating a DNA molecule suitable for the initiation of homologous recombination. The AddB subunit has 5' -&gt; 3' nuclease activity but not helicase activity. The chain is ATP-dependent helicase/deoxyribonuclease subunit B from Desulforamulus reducens (strain ATCC BAA-1160 / DSM 100696 / MI-1) (Desulfotomaculum reducens).